Here is a 352-residue protein sequence, read N- to C-terminus: UDP-N-acetylglucosamine--N-acetylmuramyl-(pentapeptide) pyrophosphoryl-undecaprenol N-acetylglucosamine transferase 2 (352 aa).

UDP-N-acetyl-alpha-D-glucosamine-binding positions include 11 to 13, Arg164, Ser194, and Gln289; that span reads SAG.

Belongs to the glycosyltransferase 28 family. MurG subfamily.

It is found in the cell membrane. It carries out the reaction di-trans,octa-cis-undecaprenyl diphospho-N-acetyl-alpha-D-muramoyl-L-alanyl-D-glutamyl-meso-2,6-diaminopimeloyl-D-alanyl-D-alanine + UDP-N-acetyl-alpha-D-glucosamine = di-trans,octa-cis-undecaprenyl diphospho-[N-acetyl-alpha-D-glucosaminyl-(1-&gt;4)]-N-acetyl-alpha-D-muramoyl-L-alanyl-D-glutamyl-meso-2,6-diaminopimeloyl-D-alanyl-D-alanine + UDP + H(+). It functions in the pathway cell wall biogenesis; peptidoglycan biosynthesis. Cell wall formation. Catalyzes the transfer of a GlcNAc subunit on undecaprenyl-pyrophosphoryl-MurNAc-pentapeptide (lipid intermediate I) to form undecaprenyl-pyrophosphoryl-MurNAc-(pentapeptide)GlcNAc (lipid intermediate II). This Bacillus anthracis protein is UDP-N-acetylglucosamine--N-acetylmuramyl-(pentapeptide) pyrophosphoryl-undecaprenol N-acetylglucosamine transferase 2.